Reading from the N-terminus, the 1073-residue chain is Carbamoyl phosphate synthase large chain (1073 aa).

The interval 2 to 403 (PKRTDIKSIL…SLQKALRGLE (402 aa)) is carboxyphosphate synthetic domain. ATP is bound by residues Arg129, Arg169, Gly175, Gly176, Glu208, Leu210, Glu215, Gly241, Ile242, His243, Gln285, and Glu299. The 196-residue stretch at 133–328 (DVAMKKIGLE…IAKVAAKLAV (196 aa)) folds into the ATP-grasp 1 domain. Residues Gln285, Glu299, and Asn301 each coordinate Mg(2+). Mn(2+)-binding residues include Gln285, Glu299, and Asn301. The tract at residues 404–553 (VGATGFDPKV…YSTYEEECEA (150 aa)) is oligomerization domain. Residues 554-936 (NPSTDREKIM…AFAKAQLGSN (383 aa)) are carbamoyl phosphate synthetic domain. The region spanning 679–870 (QHAVERLKLK…LAKVAARVMA (192 aa)) is the ATP-grasp 2 domain. Positions 715, 754, 756, 761, 786, 787, 788, 789, 829, and 841 each coordinate ATP. Mg(2+) is bound by residues Gln829, Glu841, and Asn843. Residues Gln829, Glu841, and Asn843 each coordinate Mn(2+). In terms of domain architecture, MGS-like spans 937-1073 (STMKKHGRAL…SVQEMHAQIK (137 aa)). Residues 937 to 1073 (STMKKHGRAL…SVQEMHAQIK (137 aa)) are allosteric domain.

Belongs to the CarB family. In terms of assembly, composed of two chains; the small (or glutamine) chain promotes the hydrolysis of glutamine to ammonia, which is used by the large (or ammonia) chain to synthesize carbamoyl phosphate. Tetramer of heterodimers (alpha,beta)4. Mg(2+) is required as a cofactor. It depends on Mn(2+) as a cofactor.

The enzyme catalyses hydrogencarbonate + L-glutamine + 2 ATP + H2O = carbamoyl phosphate + L-glutamate + 2 ADP + phosphate + 2 H(+). It carries out the reaction hydrogencarbonate + NH4(+) + 2 ATP = carbamoyl phosphate + 2 ADP + phosphate + 2 H(+). It functions in the pathway amino-acid biosynthesis; L-arginine biosynthesis; carbamoyl phosphate from bicarbonate: step 1/1. It participates in pyrimidine metabolism; UMP biosynthesis via de novo pathway; (S)-dihydroorotate from bicarbonate: step 1/3. Its function is as follows. Large subunit of the glutamine-dependent carbamoyl phosphate synthetase (CPSase). CPSase catalyzes the formation of carbamoyl phosphate from the ammonia moiety of glutamine, carbonate, and phosphate donated by ATP, constituting the first step of 2 biosynthetic pathways, one leading to arginine and/or urea and the other to pyrimidine nucleotides. The large subunit (synthetase) binds the substrates ammonia (free or transferred from glutamine from the small subunit), hydrogencarbonate and ATP and carries out an ATP-coupled ligase reaction, activating hydrogencarbonate by forming carboxy phosphate which reacts with ammonia to form carbamoyl phosphate. The polypeptide is Carbamoyl phosphate synthase large chain (Escherichia coli (strain K12)).